A 312-amino-acid polypeptide reads, in one-letter code: Tetraacyldisaccharide 4'-kinase (312 aa).

60–67 (IAGGSGKT) lines the ATP pocket.

This sequence belongs to the LpxK family.

It catalyses the reaction a lipid A disaccharide + ATP = a lipid IVA + ADP + H(+). Its pathway is glycolipid biosynthesis; lipid IV(A) biosynthesis; lipid IV(A) from (3R)-3-hydroxytetradecanoyl-[acyl-carrier-protein] and UDP-N-acetyl-alpha-D-glucosamine: step 6/6. Transfers the gamma-phosphate of ATP to the 4'-position of a tetraacyldisaccharide 1-phosphate intermediate (termed DS-1-P) to form tetraacyldisaccharide 1,4'-bis-phosphate (lipid IVA). This chain is Tetraacyldisaccharide 4'-kinase, found in Helicobacter pylori (strain HPAG1).